A 282-amino-acid polypeptide reads, in one-letter code: Probable endonuclease 4 (282 aa).

Zn(2+) is bound by residues His69, His109, Glu145, Asp179, His182, His216, Asp229, His231, and Glu261.

Belongs to the AP endonuclease 2 family. It depends on Zn(2+) as a cofactor.

It catalyses the reaction Endonucleolytic cleavage to 5'-phosphooligonucleotide end-products.. Endonuclease IV plays a role in DNA repair. It cleaves phosphodiester bonds at apurinic or apyrimidinic (AP) sites, generating a 3'-hydroxyl group and a 5'-terminal sugar phosphate. The protein is Probable endonuclease 4 of Magnetococcus marinus (strain ATCC BAA-1437 / JCM 17883 / MC-1).